The following is a 359-amino-acid chain: Peptide chain release factor 1 (359 aa).

At Gln236 the chain carries N5-methylglutamine.

It belongs to the prokaryotic/mitochondrial release factor family. Post-translationally, methylated by PrmC. Methylation increases the termination efficiency of RF1.

The protein resides in the cytoplasm. In terms of biological role, peptide chain release factor 1 directs the termination of translation in response to the peptide chain termination codons UAG and UAA. The polypeptide is Peptide chain release factor 1 (Ureaplasma parvum serovar 3 (strain ATCC 27815 / 27 / NCTC 11736)).